A 438-amino-acid polypeptide reads, in one-letter code: Xylose isomerase (438 aa).

Active-site residues include H100 and D103. Mg(2+) is bound by residues E231, E267, H270, D295, D306, D308, and D338.

This sequence belongs to the xylose isomerase family. Homotetramer. Requires Mg(2+) as cofactor.

It localises to the cytoplasm. The enzyme catalyses alpha-D-xylose = alpha-D-xylulofuranose. The sequence is that of Xylose isomerase from Caldanaerobacter subterraneus subsp. yonseiensis (Thermoanaerobacter yonseiensis).